Reading from the N-terminus, the 278-residue chain is MELWPCLAAALLLLLLLVQLSRAAEFYAKVALYCALCFTVSAVASLVCLLRHGGRTVENMSIIGWFVRSFKYFYGLRFEVRDPRRLQEARPCVIVSNHQSILDMMGLMEVLPERCVQIAKRELLFLGPVGLIMYLGGVFFINRQRSSTAMTVMADLGERMVRENLKVWIYPEGTRNDNGDLLPFKKGAFYLAVQAQVPIVPVVYSSFSSFYNTKKKFFTSGTVTVQVLEAIPTSGLTAADVPALVDTCHRAMRTTFLHISKTPQENGATAGSGVQPAQ.

The N-terminal stretch at 1–23 is a signal peptide; sequence MELWPCLAAALLLLLLLVQLSRA. Residues 24 to 29 lie on the Lumenal side of the membrane; the sequence is AEFYAK. The helical transmembrane segment at 30-50 threads the bilayer; the sequence is VALYCALCFTVSAVASLVCLL. Residues 51–121 are Cytoplasmic-facing; the sequence is RHGGRTVENM…PERCVQIAKR (71 aa). Positions 98–103 match the HXXXXD motif motif; that stretch reads HQSILD. Residues 122–142 form a helical membrane-spanning segment; that stretch reads ELLFLGPVGLIMYLGGVFFIN. The Lumenal portion of the chain corresponds to 143–278; it reads RQRSSTAMTV…TAGSGVQPAQ (136 aa). An EGTR motif motif is present at residues 172-175; that stretch reads EGTR.

The protein belongs to the 1-acyl-sn-glycerol-3-phosphate acyltransferase family. In terms of tissue distribution, expressed predominantly in adipose tissue, pancreas and liver.

Its subcellular location is the endoplasmic reticulum membrane. It carries out the reaction a 1-acyl-sn-glycero-3-phosphate + an acyl-CoA = a 1,2-diacyl-sn-glycero-3-phosphate + CoA. The catalysed reaction is 1-(9Z-octadecenoyl)-sn-glycero-3-phosphate + (9Z)-octadecenoyl-CoA = 1,2-di-(9Z-octadecenoyl)-sn-glycero-3-phosphate + CoA. It catalyses the reaction 1-(9Z-octadecenoyl)-sn-glycero-3-phosphate + hexadecanoyl-CoA = 1-(9Z)-octadecenoyl-2-hexadecanoyl-sn-glycero-3-phosphate + CoA. The enzyme catalyses heptadecanoyl-CoA + 1-(9Z-octadecenoyl)-sn-glycero-3-phosphate = 1-(9Z)-octadecenoyl-2-heptadecanoyl-sn-glycero-3-phosphate + CoA. It carries out the reaction 1-(9Z-octadecenoyl)-sn-glycero-3-phosphate + (9Z,12Z)-octadecadienoyl-CoA = 1-(9Z)-octadecenoyl-2-(9Z,12Z)-octadecadienoyl-sn-glycero-3-phosphate + CoA. The catalysed reaction is 1-(9Z-octadecenoyl)-sn-glycero-3-phosphate + tetradecanoyl-CoA = 1-(9Z)-octadecenoyl-2-tetradecanoyl-sn-glycero-3-phosphate + CoA. It catalyses the reaction pentadecanoyl-CoA + 1-(9Z-octadecenoyl)-sn-glycero-3-phosphate = 1-(9Z)-octadecenoyl-2-pentadecanoyl-sn-glycero-3-phosphate + CoA. The enzyme catalyses 1-hexadecanoyl-sn-glycero-3-phosphate + (9Z)-octadecenoyl-CoA = 1-hexadecanoyl-2-(9Z-octadecenoyl)-sn-glycero-3-phosphate + CoA. It carries out the reaction 1-tetradecanoyl-sn-glycerol 3-phosphate + (9Z)-octadecenoyl-CoA = 1-tetradecanoyl-2-(9Z)-octadecenoyl-sn-glycero-3-phosphate + CoA. The catalysed reaction is 1-(9Z,12Z,15Z)-octadecatrienoyl-sn-glycero-3-phosphate + (9Z)-octadecenoyl-CoA = 1-(9Z,12Z,15Z)-octadecatrienoyl-2-(9Z)-octadecenoyl-sn-glycero-3-phosphate + CoA. It catalyses the reaction 1-(6Z,9Z,12Z-octadecatrienoyl)-sn-glycero-3-phosphate + (9Z)-octadecenoyl-CoA = (6Z,9Z,12Z)-octadecatrienoyl-2-(9Z)-octadecenoyl-sn-glycero-3-phosphate + CoA. The enzyme catalyses 1-eicosanoyl-sn-glycero-3-phosphate + (9Z)-octadecenoyl-CoA = 1-eicosanoyl-2-(9Z)-octadecenoyl-sn-glycero-3-phosphate + CoA. It carries out the reaction 1-hexadecanoyl-sn-glycero-3-phosphate + octadecanoyl-CoA = 1-hexadecanoyl-2-octadecanoyl-sn-glycero-3-phosphate + CoA. The catalysed reaction is 1-hexadecanoyl-sn-glycero-3-phosphate + (5Z,8Z,11Z,14Z)-eicosatetraenoyl-CoA = 1-hexadecanoyl-2-(5Z,8Z,11Z,14Z-eicosatetraenoyl)-sn-glycero-3-phosphate + CoA. It catalyses the reaction 1-hexadecanoyl-sn-glycero-3-phosphate + hexadecanoyl-CoA = 1,2-dihexadecanoyl-sn-glycero-3-phosphate + CoA. The enzyme catalyses 1-hexadecanoyl-sn-glycero-3-phosphate + tetradecanoyl-CoA = 1-hexadecanoyl-2-tetradecanoyl-sn-glycero-3-phosphate + CoA. It carries out the reaction (11Z)-octadecenoyl-CoA + 1-(9Z-octadecenoyl)-sn-glycero-3-phosphate = 1-(9Z)-octadecenoyl-2-(11Z)-octadecenoyl-sn-glycero-3-phosphate + CoA. Its pathway is phospholipid metabolism; CDP-diacylglycerol biosynthesis; CDP-diacylglycerol from sn-glycerol 3-phosphate: step 2/3. Functionally, converts 1-acyl-sn-glycerol-3-phosphate (lysophosphatidic acid or LPA) into 1,2-diacyl-sn-glycerol-3-phosphate (phosphatidic acid or PA) by incorporating an acyl moiety at the sn-2 position of the glycerol backbone. This chain is 1-acyl-sn-glycerol-3-phosphate acyltransferase beta (AGPAT2), found in Homo sapiens (Human).